Consider the following 186-residue polypeptide: Nuclear transcription factor Y subunit B-1 (186 aa).

Positions Met-1 to Gly-24 are disordered. Residues Leu-34–Val-40 mediate DNA binding. Residues Thr-61–Val-72 form a subunit association domain (SAD) region. The tract at residues Gly-123–Gly-142 is disordered.

The protein belongs to the NFYB/HAP3 subunit family. In terms of assembly, heterotrimeric transcription factor composed of three components, NF-YA, NF-YB and NF-YC. NF-YB and NF-YC must interact and dimerize for NF-YA association and DNA binding. Interacts with MADS18. Forms a ternary complex with the MADS6-MADS18 heterodimer. Expressed in developing kernels.

Its subcellular location is the nucleus. In terms of biological role, component of the NF-Y/HAP transcription factor complex. The NF-Y complex stimulates the transcription of various genes by recognizing and binding to a CCAAT motif in promoters. May act through association with MADS-box proteins. May regulate the expression of genes involved in flowering. In Oryza sativa subsp. japonica (Rice), this protein is Nuclear transcription factor Y subunit B-1 (NFYB1).